A 258-amino-acid polypeptide reads, in one-letter code: UPF0758 protein Bamb_2548 (258 aa).

The disordered stretch occupies residues 1 to 43; that stretch reads MLSPCLAAPATECRDPADAPAAPARHTGPARPRKRRPRNWKPH. Over residues 31 to 43 the composition is skewed to basic residues; that stretch reads RPRKRRPRNWKPH. Residues 136-258 form the MPN domain; sequence QIDSPGAVED…TFSFARAGWL (123 aa). Positions 207, 209, and 220 each coordinate Zn(2+). The short motif at 207–220 is the JAMM motif element; the sequence is HNHPSGAVQPSAED.

This sequence belongs to the UPF0758 family.

The protein is UPF0758 protein Bamb_2548 of Burkholderia ambifaria (strain ATCC BAA-244 / DSM 16087 / CCUG 44356 / LMG 19182 / AMMD) (Burkholderia cepacia (strain AMMD)).